The primary structure comprises 707 residues: Alpha-hemolysin translocation ATP-binding protein HlyB (707 aa).

One can recognise a Peptidase C39 domain in the interval 3 to 125 (SCHKIDYGLY…ALYQGHIILI (123 aa)). H83 is an active-site residue. In terms of domain architecture, ABC transmembrane type-1 spans 154-436 (FIETLVVSVF…LAQIWQDFQQ (283 aa)). 5 consecutive transmembrane segments (helical) span residues 158 to 178 (LVVS…FQVV), 191 to 211 (LNVI…LSGL), 269 to 289 (ALTS…MWYY), 295 to 315 (LVIL…SPIL), and 388 to 408 (VMII…LSIG). The ABC transporter domain maps to 468–703 (ITFRNIRFRY…PESLYSYLYQ (236 aa)). Residue 502 to 509 (GRSGSGKS) participates in ATP binding.

This sequence belongs to the ABC transporter superfamily. Protein-1 exporter (TC 3.A.1.109) family. Homodimer.

It localises to the cell inner membrane. In terms of biological role, part of the ABC transporter complex HlyBD involved in hemolysin export. Transmembrane domains (TMD) form a pore in the inner membrane and the ATP-binding domain (NBD) is responsible for energy generation. The sequence is that of Alpha-hemolysin translocation ATP-binding protein HlyB (hlyB) from Escherichia coli.